The sequence spans 85 residues: N.vectensis toxin 1 6 (85 aa).

The signal sequence occupies residues 1-20 (MASFKIVIVCLALLVAVACA). Positions 21 to 36 (RRRDMMSDDELDYHYS) are excised as a propeptide. Disulfide bonds link cysteine 42–cysteine 82, cysteine 44–cysteine 72, and cysteine 65–cysteine 83.

This sequence belongs to the sea anemone sodium channel inhibitory toxin family. Type II subfamily. Expressed in ectodermal glands and in clumps outside of the extodermal layer. Is not expressed in nematocytes. In adult female tissues, shows similar expression levels in mesenteries (gametes-producing tissue), tentacles, pharynx and physa.

It localises to the secreted. Its function is as follows. Binds to site 3 of voltage-gated sodium channels and inhibits the inactivation process. Is highly active on DmNav1/TipE (drosophila) and is only extremely weakly active on rat Nav1.4-beta-1/SCN4A-SCN1B, and on human Nav1.5-beta-1/SCN5A-beta-1. This reveals high specificity for arthropod over mammalian channels. In vivo, when released into the medium, this recombinant toxin induces impaired swimming, paralysis and death of the crustacean A.nauplii within several hours. Also causes paralysis of cherry shrimps immediately after injection at very low doses. Its effect on zebrafish (D.rerio) larvae is also rapid, since it induces tail twitching accompanied by impaired swimming after 20 minutes and complete paralysis within 45 minutes. It has also been observed to cause death of zebrafish larvae within 1 hour. The protein is N.vectensis toxin 1 6 of Nematostella vectensis (Starlet sea anemone).